The chain runs to 820 residues: Chitinase A (820 aa).

The first 21 residues, 1–21 (MKLNKITSYIGFALLSGGALA), serve as a signal peptide directing secretion. The GH18 domain occupies 158 to 588 (RVTGAYFVEW…NAMYDGLTAG (431 aa)). Glu313 functions as the Proton donor in the catalytic mechanism.

Belongs to the glycosyl hydrolase 18 family. Chitinase class II subfamily.

It catalyses the reaction Random endo-hydrolysis of N-acetyl-beta-D-glucosaminide (1-&gt;4)-beta-linkages in chitin and chitodextrins.. Its activity is regulated as follows. Stimulated by magnesium ions; inhibited by N-bromosuccinimide and 2-hydroxy-5-nitrobenzyl bromide. This is Chitinase A (chiA) from Pseudoalteromonas piscicida.